The chain runs to 390 residues: Phosphopentomutase (390 aa).

Residues Asp-10, Asp-284, His-289, Asp-325, His-326, and His-337 each contribute to the Mn(2+) site.

The protein belongs to the phosphopentomutase family. Mn(2+) serves as cofactor.

Its subcellular location is the cytoplasm. It carries out the reaction 2-deoxy-alpha-D-ribose 1-phosphate = 2-deoxy-D-ribose 5-phosphate. The catalysed reaction is alpha-D-ribose 1-phosphate = D-ribose 5-phosphate. It participates in carbohydrate degradation; 2-deoxy-D-ribose 1-phosphate degradation; D-glyceraldehyde 3-phosphate and acetaldehyde from 2-deoxy-alpha-D-ribose 1-phosphate: step 1/2. In terms of biological role, isomerase that catalyzes the conversion of deoxy-ribose 1-phosphate (dRib-1-P) and ribose 1-phosphate (Rib-1-P) to deoxy-ribose 5-phosphate (dRib-5-P) and ribose 5-phosphate (Rib-5-P), respectively. The chain is Phosphopentomutase from Clostridioides difficile (strain 630) (Peptoclostridium difficile).